We begin with the raw amino-acid sequence, 157 residues long: 2-C-methyl-D-erythritol 2,4-cyclodiphosphate synthase (157 aa).

Asp8 and His10 together coordinate a divalent metal cation. Residues 8–10 and 34–35 each bind 4-CDP-2-C-methyl-D-erythritol 2-phosphate; these read DIH and HS. An a divalent metal cation-binding site is contributed by His42. Residues 56 to 58 and 132 to 135 each bind 4-CDP-2-C-methyl-D-erythritol 2-phosphate; these read DIG and TTNE.

It belongs to the IspF family. Homotrimer. The cofactor is a divalent metal cation.

It catalyses the reaction 4-CDP-2-C-methyl-D-erythritol 2-phosphate = 2-C-methyl-D-erythritol 2,4-cyclic diphosphate + CMP. It participates in isoprenoid biosynthesis; isopentenyl diphosphate biosynthesis via DXP pathway; isopentenyl diphosphate from 1-deoxy-D-xylulose 5-phosphate: step 4/6. Functionally, involved in the biosynthesis of isopentenyl diphosphate (IPP) and dimethylallyl diphosphate (DMAPP), two major building blocks of isoprenoid compounds. Catalyzes the conversion of 4-diphosphocytidyl-2-C-methyl-D-erythritol 2-phosphate (CDP-ME2P) to 2-C-methyl-D-erythritol 2,4-cyclodiphosphate (ME-CPP) with a corresponding release of cytidine 5-monophosphate (CMP). The sequence is that of 2-C-methyl-D-erythritol 2,4-cyclodiphosphate synthase from Synechococcus sp. (strain JA-3-3Ab) (Cyanobacteria bacterium Yellowstone A-Prime).